Reading from the N-terminus, the 825-residue chain is Extracellular exo-alpha-L-arabinofuranosidase (825 aa).

A signal peptide spans 1-29 (MSRIRWRYGTAATALLVAAGLVPTATAHA). E58 serves as a coordination point for alpha-L-arabinofuranose. Residues 70 to 215 (AELVQNRSFE…ALDMVSLFPR (146 aa)) enclose the CBM-cenC domain. Alpha-L-arabinofuranose contacts are provided by residues C247 and 379 to 380 (NE). The Proton donor/acceptor role is filled by E380.

Belongs to the glycosyl hydrolase 51 family.

It is found in the secreted. The enzyme catalyses Hydrolysis of terminal non-reducing alpha-L-arabinofuranoside residues in alpha-L-arabinosides.. Involved in the degradation of arabinan and is a key enzyme in the complete degradation of the plant cell wall. Catalyzes the cleavage of terminal alpha-L-arabinofuranosyl residues of arabinan present in the arabinofuranosyl polysaccharides or oligosaccharides. It cannot act on other arabinose-containing polysaccharides and arabinoxylo-oligosaccharides. It leaves most of the polymer intact, including most of the main-chain residues and the arabinose side chains. It acts preferentially on the linear alpha-(1-&gt;2)-linked arabinofuranobiosides and alpha-(1-&gt;3)-linked arabinofuranobiosides, and is much less effective on alpha-(1-&gt;5)-linked arabinofuranobiosides. It also hydrolyzes the terminal alpha-(1-&gt;3)-linked arabinofuranotriosides in preference to the alpha-(1-&gt;5)-linked arabinofuranotriosides. The chain is Extracellular exo-alpha-L-arabinofuranosidase from Streptomyces chartreusis.